A 280-amino-acid chain; its full sequence is Pantothenate synthetase (280 aa).

26–33 (MGNLHDGH) lines the ATP pocket. H33 acts as the Proton donor in catalysis. Q57 lines the (R)-pantoate pocket. Position 57 (Q57) interacts with beta-alanine. An ATP-binding site is contributed by 147–150 (GKKD). Q153 is a (R)-pantoate binding site. Residue 184–187 (LSSR) coordinates ATP.

The protein belongs to the pantothenate synthetase family. As to quaternary structure, homodimer.

The protein resides in the cytoplasm. The catalysed reaction is (R)-pantoate + beta-alanine + ATP = (R)-pantothenate + AMP + diphosphate + H(+). It participates in cofactor biosynthesis; (R)-pantothenate biosynthesis; (R)-pantothenate from (R)-pantoate and beta-alanine: step 1/1. Its function is as follows. Catalyzes the condensation of pantoate with beta-alanine in an ATP-dependent reaction via a pantoyl-adenylate intermediate. This chain is Pantothenate synthetase, found in Verminephrobacter eiseniae (strain EF01-2).